The primary structure comprises 390 residues: MDQFIKQDETGDLIETGMNVANHFLSAPIQGTNSLSKASIIPGVAPVLIGNPEQKNIQHPTASHQGSKSKGSGSGVRSIIVPPSEASNGGTQIPEPLFAQTGQGGIVTTVYQDPTIQPTGSYRSVELAKIGKERMINRFVEKPRTSTPVTEFKRGAGSRAQGQTIQEEGIDGNGASAGSKERSGSLSGATLYAHLSLPQQDSTPANVGIAPQSAISANEIMDLLRGMDARLQHLEQKVDKVLAQGSMVTQIKNELSTVKTTLATIEGMMATVKIMDPGNPTGVPVDELRRSFSDHVTIVSGPGDVPFSSSEEPTLYLDELARPVSKPRPAKQTKPQPVKDLAGRKVMITKMITDCVANPQMKQAFEQRLAKASTEDALNDIKKDIIRSAI.

Phosphothreonine is present on residues T10 and T16. Residues 54–65 (QKNIQHPTASHQ) are compositionally biased toward polar residues. Disordered regions lie at residues 54–98 (QKNI…EPLF) and 144–183 (RTST…KERS). The residue at position 69 (S69) is a Phosphoserine. 3 positions are modified to phosphothreonine: T91, T150, and T164. Phosphoserine is present on S187. T249 bears the Phosphothreonine mark. At S256 the chain carries Phosphoserine. T257 and T281 each carry phosphothreonine. Residues S291 and S293 each carry the phosphoserine modification. At T297 the chain carries Phosphothreonine. Phosphoserine is present on residues S300 and S373. Positions 342 to 390 (AGRKVMITKMITDCVANPQMKQAFEQRLAKASTEDALNDIKKDIIRSAI) are interaction with the nucleoprotein. A Phosphothreonine modification is found at T374.

This sequence belongs to the rubulavirus/avulavirus P protein family. In terms of assembly, homotetramer. Interacts (via multimerization domain) with polymerase L; this interaction forms the polymerase L-P complex. Interacts (via N-terminus) with N0 (via Ncore); this interaction allows P to chaperon N0 to avoid N polymerization before encapsidation. Interacts (via C-terminus) with N-RNA template; this interaction positions the polymerase on the template for both transcription and replication. Interacts with host RPS6KB1 kinase; this interaction may play a role in the viral replication and transcription.

Functionally, essential cofactor of the RNA polymerase L that plays a central role in the transcription and replication by forming the polymerase complex with RNA polymerase L and recruiting L to the genomic N-RNA template for RNA synthesis. Also plays a central role in the encapsidation of nascent RNA chains by forming the encapsidation complex with the nucleocapsid protein N (N-P complex). Acts as a chaperone for newly synthesized free N protein, so-called N0, allowing encapsidation of nascent RNA chains during replication. The nucleoprotein protein N prevents excessive phosphorylation of P, which leads to down-regulation of viral transcription/ replication. Participates, together with N, in the formation of viral factories (viroplasms), which are large inclusions in the host cytoplasm where replication takes place. This chain is Phosphoprotein (P/V), found in Homo sapiens (Human).